A 94-amino-acid chain; its full sequence is Probable Fe(2+)-trafficking protein (94 aa).

The protein belongs to the Fe(2+)-trafficking protein family.

Its function is as follows. Could be a mediator in iron transactions between iron acquisition and iron-requiring processes, such as synthesis and/or repair of Fe-S clusters in biosynthetic enzymes. The protein is Probable Fe(2+)-trafficking protein of Marinomonas sp. (strain MWYL1).